The primary structure comprises 238 residues: Protein LicA homolog (238 aa).

It belongs to the peptidase S49 family.

The protein is Protein LicA homolog (licA) of Mycoplasma capricolum subsp. capricolum (strain California kid / ATCC 27343 / NCTC 10154).